An 851-amino-acid chain; its full sequence is DNA mismatch repair protein MutS (851 aa).

602-609 is an ATP binding site; the sequence is GPNMSGKS.

It belongs to the DNA mismatch repair MutS family.

In terms of biological role, this protein is involved in the repair of mismatches in DNA. It is possible that it carries out the mismatch recognition step. This protein has a weak ATPase activity. In Streptococcus pyogenes serotype M18 (strain MGAS8232), this protein is DNA mismatch repair protein MutS.